A 103-amino-acid polypeptide reads, in one-letter code: High-potential iron-sulfur protein (103 aa).

Positions 1 to 28 (MSNRRLFLKSIPIMAAAGAVGMAGLARA) are cleaved as a signal peptide. Residues Cys66, Cys69, Cys82, and Cys96 each coordinate [4Fe-4S] cluster.

This sequence belongs to the high-potential iron-sulfur protein (HiPIP) family. In terms of assembly, homodimer.

The protein localises to the periplasm. Functionally, specific class of high-redox-potential 4Fe-4S ferredoxins. Functions in anaerobic electron transport in most purple and in some other photosynthetic bacteria and in at least one genus (Paracoccus) of halophilic, denitrifying bacteria. The chain is High-potential iron-sulfur protein (hip) from Ralstonia nicotianae (strain ATCC BAA-1114 / GMI1000) (Ralstonia solanacearum).